A 261-amino-acid polypeptide reads, in one-letter code: Rho-related GTP-binding protein RhoU (261 aa).

Positions 1-48 (MAPQQGRPALPARCEPPAAPPVPPRRERGGRGARGPGVSGGRGRAGGA) are disordered. A compositionally biased stretch (low complexity) spans 7 to 16 (RPALPARCEP). Residues 32 to 48 (GARGPGVSGGRGRAGGA) are compositionally biased toward gly residues. Residues 59–66 (GDGAVGKT), 106–110 (DTAGQ), and 164–167 (TQSD) contribute to the GTP site. Residues lysine 180 and lysine 251 each participate in a glycyl lysine isopeptide (Lys-Gly) (interchain with G-Cter in ubiquitin) cross-link. Cysteine 259 is lipidated: S-palmitoyl cysteine.

The protein belongs to the small GTPase superfamily. Rho family. Interacts with PAK1. Interacts with PAK3. Interacts with ARHGAP30 in a GTP-independent manner. In its GTP-loaded conformation, interacts with ARHGAP31. Interacts with PTK2B/PYK2. Interacts with PAK4; interaction protects RHOU from ubiquitination and subsequent degradation. Requires Mg(2+) as cofactor. In terms of processing, tyrosine phosphorylated by SRC in response to PTK2B/PYK2 activation. Post-translationally, ubiquitinated. 'Lys-48'-linked ubiquitination at Lys-180 and Lys-251 by the ECS(RAB40A) complex leading to its degradation.

The protein localises to the cell membrane. Its subcellular location is the golgi apparatus membrane. It is found in the cell junction. It localises to the focal adhesion. The protein resides in the cell projection. The protein localises to the podosome. Functionally, binds to and activates protein kinase PAK1. Plays a role in the regulation of cell morphology, cytoskeletal organization and focal adhesion assembly during cell migration. Also stimulates quiescent cells to reenter the cell cycle. Has no detectable GTPase activity but its high intrinsic guanine nucleotide exchange activity suggests it is constitutively GTP-bound. The protein is Rho-related GTP-binding protein RhoU of Mus musculus (Mouse).